Reading from the N-terminus, the 248-residue chain is 5'-nucleotidase SurE (248 aa).

A divalent metal cation contacts are provided by D8, D9, S39, and N91.

This sequence belongs to the SurE nucleotidase family. A divalent metal cation is required as a cofactor.

The protein resides in the cytoplasm. It catalyses the reaction a ribonucleoside 5'-phosphate + H2O = a ribonucleoside + phosphate. Functionally, nucleotidase that shows phosphatase activity on nucleoside 5'-monophosphates. The polypeptide is 5'-nucleotidase SurE (Geotalea daltonii (strain DSM 22248 / JCM 15807 / FRC-32) (Geobacter daltonii)).